Consider the following 214-residue polypeptide: Cysteine-rich venom protein LEI1 (214 aa).

Positions 1-18 are cleaved as a signal peptide; sequence MIAFILLSLAAVLQQSFG. In terms of domain architecture, SCP spans 37–165; sequence VNMHNSLRRS…YYSYFYVCQY (129 aa). 5 disulfide bridges follow: C74-C152, C91-C166, C147-C163, C185-C192, and C188-C197. A ShKT domain is found at 201–214; sequence CTVENKFTNCNTLV.

This sequence belongs to the CRISP family. In terms of tissue distribution, expressed by the venom gland.

It is found in the secreted. In terms of biological role, blocks contraction of smooth muscle elicited by high potassium-induced depolarization, but does not block caffeine-stimulated contraction. May target voltage-gated calcium channels on smooth muscle. In Leioheterodon madagascariensis (Malagasy giant hognose snake), this protein is Cysteine-rich venom protein LEI1.